Consider the following 386-residue polypeptide: S-adenosylmethionine synthase (386 aa).

Residue His-17 coordinates ATP. Asp-19 provides a ligand contact to Mg(2+). Residue Glu-45 coordinates K(+). Glu-58 and Gln-101 together coordinate L-methionine. The interval 101 to 111 (QSPDISQGVTE) is flexible loop. ATP contacts are provided by residues 168 to 170 (DAK), Asp-242, 248 to 249 (RK), Ala-265, and Lys-269. An L-methionine-binding site is contributed by Asp-242. Lys-273 contacts L-methionine.

This sequence belongs to the AdoMet synthase family. Homotetramer; dimer of dimers. Requires Mg(2+) as cofactor. K(+) is required as a cofactor.

Its subcellular location is the cytoplasm. The catalysed reaction is L-methionine + ATP + H2O = S-adenosyl-L-methionine + phosphate + diphosphate. It functions in the pathway amino-acid biosynthesis; S-adenosyl-L-methionine biosynthesis; S-adenosyl-L-methionine from L-methionine: step 1/1. Functionally, catalyzes the formation of S-adenosylmethionine (AdoMet) from methionine and ATP. The overall synthetic reaction is composed of two sequential steps, AdoMet formation and the subsequent tripolyphosphate hydrolysis which occurs prior to release of AdoMet from the enzyme. This Leptospira borgpetersenii serovar Hardjo-bovis (strain JB197) protein is S-adenosylmethionine synthase.